Reading from the N-terminus, the 107-residue chain is Holo-[acyl-carrier-protein] synthase (107 aa).

Residues Asp-10 and Glu-54 each coordinate Mg(2+).

This sequence belongs to the P-Pant transferase superfamily. AcpS family. Mg(2+) serves as cofactor.

Its subcellular location is the cytoplasm. The enzyme catalyses apo-[ACP] + CoA = holo-[ACP] + adenosine 3',5'-bisphosphate + H(+). Its function is as follows. Transfers the 4'-phosphopantetheine moiety from coenzyme A to a Ser of acyl-carrier-protein. This Mycoplasma mobile (strain ATCC 43663 / 163K / NCTC 11711) (Mesomycoplasma mobile) protein is Holo-[acyl-carrier-protein] synthase.